We begin with the raw amino-acid sequence, 88 residues long: UPF0297 protein LAR_0520 (88 aa).

It belongs to the UPF0297 family.

This Limosilactobacillus reuteri subsp. reuteri (strain JCM 1112) (Lactobacillus reuteri) protein is UPF0297 protein LAR_0520.